The chain runs to 1029 residues: U2 snRNP-associated SURP motif-containing protein (1029 aa).

Disordered regions lie at residues 1–111 and 141–274; these read MADK…EDEK and VNAA…PSTT. Alanine 2 is modified (N-acetylalanine). The segment covering 7-16 has biased composition (polar residues); sequence GGSQKASSKT. Residues 45 to 54 are compositionally biased toward basic residues; the sequence is TRPKSPRKHN. Basic and acidic residues predominate over residues 55-64; that stretch reads YRNESARESL. Serine 67 bears the Phosphoserine mark. Lysine 80 is covalently cross-linked (Glycyl lysine isopeptide (Lys-Gly) (interchain with G-Cter in SUMO2)). The stretch at 92 to 121 forms a coiled coil; it reads AKRTLSKKEQEELKKKEDEKAAAEIYEEFL. 2 stretches are compositionally biased toward basic and acidic residues: residues 97–111 and 144–155; these read SKKE…EDEK and AKEEHETDEKRG. Glycyl lysine isopeptide (Lys-Gly) (interchain with G-Cter in SUMO2) cross-links involve residues lysine 145 and lysine 168. Positions 169-178 are enriched in polar residues; the sequence is NPPNQSSNER. Positions 186-222 are enriched in basic and acidic residues; the sequence is ETKKPPLKKGEKEKKKSNLELFKEELKQIQEERDERH. Residues 192–232 adopt a coiled-coil conformation; sequence LKKGEKEKKKSNLELFKEELKQIQEERDERHKTKGRLSRFE. A Phosphoserine modification is found at serine 202. Lysine 208 participates in a covalent cross-link: Glycyl lysine isopeptide (Lys-Gly) (interchain with G-Cter in SUMO2). Serine 236 is modified (phosphoserine). A compositionally biased stretch (basic and acidic residues) spans 239-249; it reads DGQRRSMDAPS. Positions 274-355 constitute an RRM domain; it reads TNLYLGNINP…FEMKLGWGKA (82 aa). Residues 430 to 473 form an SURP motif repeat; that stretch reads LIHRMIEFVVREGPMFEAMIMNREINNPMFRFLFENQTPAHVYY. Phosphoserine is present on serine 485. One can recognise a CID domain in the interval 534 to 679; that stretch reads LKEEQRDKLE…KLQNIFLGLV (146 aa). Residue threonine 719 is modified to Phosphothreonine. Residues lysine 748 and lysine 749 each participate in a glycyl lysine isopeptide (Lys-Gly) (interchain with G-Cter in SUMO2) cross-link. Lysine 760 is modified (N6-acetyllysine; alternate). Lysine 760 is covalently cross-linked (Glycyl lysine isopeptide (Lys-Gly) (interchain with G-Cter in SUMO2); alternate). Disordered stretches follow at residues 778–841 and 855–1029; these read KWEL…EEKR and QDEL…KNKH. A compositionally biased stretch (acidic residues) spans 786–806; it reads EESEEEENQNQEEESEDEEDT. A phosphoserine mark is found at serine 788, serine 800, and serine 811. Basic and acidic residues-rich tracts occupy residues 810-841 and 874-922; these read KSEE…EEKR and QVEH…TPTR. Residues lysine 822, lysine 829, and lysine 832 each participate in a glycyl lysine isopeptide (Lys-Gly) (interchain with G-Cter in SUMO2) cross-link. Residues 837–915 adopt a coiled-coil conformation; it reads SEEKRAKLRE…ESRSKDKKEK (79 aa). Threonine 931 bears the Phosphothreonine mark. Phosphoserine is present on residues serine 946 and serine 948. The span at 950 to 980 shows a compositional bias: basic and acidic residues; the sequence is KSERSERSERSHKESSRSRSSHKDSPRDVSK. The segment covering 991–1029 has biased composition (basic residues); the sequence is TPKRSRRSRSRSPKKSGKKSRSQSRSPHRSHKKSKKNKH.

The protein belongs to the splicing factor SR family. In terms of assembly, interacts with ERBB4.

It localises to the nucleus. This chain is U2 snRNP-associated SURP motif-containing protein (U2SURP), found in Homo sapiens (Human).